The following is a 156-amino-acid chain: MLNRTILVGRLTRDPELRTTQSGVNVASFTLAVNRTFTNAQGEREADFINIIVFKKQAENVNKYLSKGSLAGVDGRLQTRNYENKEGQRVYVTEVVADSIQFLEPKNSNDTQQDLYQQQVQQTRGQSQYSNNKPVKDNPFANANGPIELNDDDLPF.

The SSB domain maps to 1 to 104; sequence MLNRTILVGR…VVADSIQFLE (104 aa). Positions 104-156 are disordered; that stretch reads EPKNSNDTQQDLYQQQVQQTRGQSQYSNNKPVKDNPFANANGPIELNDDDLPF. Positions 112–128 are enriched in low complexity; the sequence is QQDLYQQQVQQTRGQSQ. The short motif at 151–156 is the Important for interaction with partner proteins element; that stretch reads DDDLPF.

Homotetramer.

Its function is as follows. Plays an important role in DNA replication, recombination and repair. Binds to ssDNA and to an array of partner proteins to recruit them to their sites of action during DNA metabolism. The polypeptide is Single-stranded DNA-binding protein (ssb) (Staphylococcus aureus (strain MRSA252)).